We begin with the raw amino-acid sequence, 78 residues long: Defensin-like protein 308 (78 aa).

Positions 1-19 (MKTSAFFIAVLLILSCSSS) are cleaved as a signal peptide. 3 disulfide bridges follow: cysteine 31–cysteine 50, cysteine 37–cysteine 55, and cysteine 41–cysteine 57.

Belongs to the DEFL family.

It localises to the secreted. This Arabidopsis thaliana (Mouse-ear cress) protein is Defensin-like protein 308.